We begin with the raw amino-acid sequence, 479 residues long: Ribosomal RNA small subunit methyltransferase F (479 aa).

Residues 125-131 (AAAPGSK), Glu-149, Asp-176, and Asp-194 contribute to the S-adenosyl-L-methionine site. Catalysis depends on Cys-247, which acts as the Nucleophile.

The protein belongs to the class I-like SAM-binding methyltransferase superfamily. RsmB/NOP family.

Its subcellular location is the cytoplasm. The enzyme catalyses cytidine(1407) in 16S rRNA + S-adenosyl-L-methionine = 5-methylcytidine(1407) in 16S rRNA + S-adenosyl-L-homocysteine + H(+). Functionally, specifically methylates the cytosine at position 1407 (m5C1407) of 16S rRNA. The chain is Ribosomal RNA small subunit methyltransferase F from Escherichia coli (strain SE11).